A 42-amino-acid polypeptide reads, in one-letter code: Photosystem I reaction center subunit IX (42 aa).

Residues 7-27 (YLSAAPVLSTLWLGALAALLI) form a helical membrane-spanning segment.

This sequence belongs to the PsaJ family.

The protein resides in the plastid membrane. In terms of biological role, may help in the organization of the PsaE and PsaF subunits. This is Photosystem I reaction center subunit IX from Cuscuta reflexa (Southern Asian dodder).